We begin with the raw amino-acid sequence, 171 residues long: PBAN-type neuropeptides (171 aa).

The signal sequence occupies residues 1–22 (MFRLYFFFNVICIFLAIRSAIG). A propeptide spanning residues 23 to 47 (GEVPDATEQKINNFLASGKDSEDLS) is cleaved from the precursor. A Leucine amide modification is found at L59. The propeptide occupies 63 to 111 (TIASELHDEMMDEIDDNPLYYSGESPQRVASEIAQGTPYVVLLLTGRVL). Residues 120-151 (HSTTPRLGRRDASSSNENNSRPPFAPRLGRNL) form a disordered region. 3 positions are modified to leucine amide: L126, L147, and L157. The propeptide occupies 160 to 171 (SFGAPVVDNFAY).

It belongs to the pyrokinin family.

Its subcellular location is the secreted. In terms of biological role, a hormone that controls sex pheromone production in females and pheromone responsiveness in male. Also mediates visceral muscle contractile activity (myotropic activity). In Aedes aegypti (Yellowfever mosquito), this protein is PBAN-type neuropeptides.